Here is a 58-residue protein sequence, read N- to C-terminus: Photosystem II reaction center protein K (58 aa).

The propeptide occupies 1–21 (MFDLYLKNLLDLSDSGTVVLA). A helical membrane pass occupies residues 29–49 (IFDPIVDVLPVIPVFFLLLAF).

The protein belongs to the PsbK family. In terms of assembly, PSII is composed of 1 copy each of membrane proteins PsbA, PsbB, PsbC, PsbD, PsbE, PsbF, PsbH, PsbI, PsbJ, PsbK, PsbL, PsbM, PsbT, PsbX, PsbY, PsbZ, Psb30/Ycf12, at least 3 peripheral proteins of the oxygen-evolving complex and a large number of cofactors. It forms dimeric complexes.

Its subcellular location is the plastid. The protein resides in the chloroplast thylakoid membrane. Its function is as follows. One of the components of the core complex of photosystem II (PSII). PSII is a light-driven water:plastoquinone oxidoreductase that uses light energy to abstract electrons from H(2)O, generating O(2) and a proton gradient subsequently used for ATP formation. It consists of a core antenna complex that captures photons, and an electron transfer chain that converts photonic excitation into a charge separation. In Zygnema circumcarinatum (Green alga), this protein is Photosystem II reaction center protein K.